Here is a 101-residue protein sequence, read N- to C-terminus: Thioredoxin 1 (101 aa).

The 100-residue stretch at 2–101 (AQTLDDLIRT…MRQEVLKAIG (100 aa)) folds into the Thioredoxin domain. Cysteines 25 and 28 form a disulfide.

It belongs to the thioredoxin family.

Functionally, participates in various redox reactions through the reversible oxidation of its active center dithiol to a disulfide and catalyzes dithiol-disulfide exchange reactions. The polypeptide is Thioredoxin 1 (trx1) (Chlorobaculum tepidum (strain ATCC 49652 / DSM 12025 / NBRC 103806 / TLS) (Chlorobium tepidum)).